Consider the following 691-residue polypeptide: Elongation factor G (691 aa).

The region spanning 8-282 (ERVRNIGIAA…AVVDYLPAPV (275 aa)) is the tr-type G domain. GTP contacts are provided by residues 17-24 (AHIDAGKT), 81-85 (DTPGH), and 135-138 (NKMD).

This sequence belongs to the TRAFAC class translation factor GTPase superfamily. Classic translation factor GTPase family. EF-G/EF-2 subfamily.

It localises to the cytoplasm. Its function is as follows. Catalyzes the GTP-dependent ribosomal translocation step during translation elongation. During this step, the ribosome changes from the pre-translocational (PRE) to the post-translocational (POST) state as the newly formed A-site-bound peptidyl-tRNA and P-site-bound deacylated tRNA move to the P and E sites, respectively. Catalyzes the coordinated movement of the two tRNA molecules, the mRNA and conformational changes in the ribosome. In Prochlorococcus marinus (strain MIT 9515), this protein is Elongation factor G.